Consider the following 259-residue polypeptide: Pyrroloquinoline-quinone synthase (259 aa).

Belongs to the PqqC family.

It catalyses the reaction 6-(2-amino-2-carboxyethyl)-7,8-dioxo-1,2,3,4,7,8-hexahydroquinoline-2,4-dicarboxylate + 3 O2 = pyrroloquinoline quinone + 2 H2O2 + 2 H2O + H(+). It functions in the pathway cofactor biosynthesis; pyrroloquinoline quinone biosynthesis. In terms of biological role, ring cyclization and eight-electron oxidation of 3a-(2-amino-2-carboxyethyl)-4,5-dioxo-4,5,6,7,8,9-hexahydroquinoline-7,9-dicarboxylic-acid to PQQ. This Bradyrhizobium diazoefficiens (strain JCM 10833 / BCRC 13528 / IAM 13628 / NBRC 14792 / USDA 110) protein is Pyrroloquinoline-quinone synthase.